Here is a 123-residue protein sequence, read N- to C-terminus: Ribosome-binding factor A (123 aa).

This sequence belongs to the RbfA family. In terms of assembly, monomer. Binds 30S ribosomal subunits, but not 50S ribosomal subunits or 70S ribosomes.

It is found in the cytoplasm. Its function is as follows. One of several proteins that assist in the late maturation steps of the functional core of the 30S ribosomal subunit. Associates with free 30S ribosomal subunits (but not with 30S subunits that are part of 70S ribosomes or polysomes). Required for efficient processing of 16S rRNA. May interact with the 5'-terminal helix region of 16S rRNA. In Cupriavidus taiwanensis (strain DSM 17343 / BCRC 17206 / CCUG 44338 / CIP 107171 / LMG 19424 / R1) (Ralstonia taiwanensis (strain LMG 19424)), this protein is Ribosome-binding factor A.